The sequence spans 89 residues: Small ribosomal subunit protein uS15 (89 aa).

It belongs to the universal ribosomal protein uS15 family. In terms of assembly, part of the 30S ribosomal subunit. Forms a bridge to the 50S subunit in the 70S ribosome, contacting the 23S rRNA.

In terms of biological role, one of the primary rRNA binding proteins, it binds directly to 16S rRNA where it helps nucleate assembly of the platform of the 30S subunit by binding and bridging several RNA helices of the 16S rRNA. Its function is as follows. Forms an intersubunit bridge (bridge B4) with the 23S rRNA of the 50S subunit in the ribosome. The protein is Small ribosomal subunit protein uS15 of Beijerinckia indica subsp. indica (strain ATCC 9039 / DSM 1715 / NCIMB 8712).